The sequence spans 125 residues: uncharacterized protein (125 aa).

It is found in the mitochondrion. This is an uncharacterized protein from Paramecium tetraurelia.